We begin with the raw amino-acid sequence, 436 residues long: Trigger factor (436 aa).

The 86-residue stretch at 164-249 (GDTVVIDYKG…IHEIKEKQLP (86 aa)) folds into the PPIase FKBP-type domain.

This sequence belongs to the FKBP-type PPIase family. Tig subfamily.

Its subcellular location is the cytoplasm. The enzyme catalyses [protein]-peptidylproline (omega=180) = [protein]-peptidylproline (omega=0). Its function is as follows. Involved in protein export. Acts as a chaperone by maintaining the newly synthesized protein in an open conformation. Functions as a peptidyl-prolyl cis-trans isomerase. In Limosilactobacillus reuteri (strain DSM 20016) (Lactobacillus reuteri), this protein is Trigger factor.